Consider the following 361-residue polypeptide: MAGNTIGQLFRVTTFGESHGLALGCIVDGVPPGIPLTEADLQHDLDRRRPGTSRYTTQRREPDQVKILSGVFDGVTTGTSIGLLIENTDQRSQDYSAIKDVFRPGHADYTYEQKYGLRDYRGGGRSSARETAMRVAAGAIAKKYLAEKFGIEIRGCLTQMGDIPLEIKDWQQVERNPFFCPDADKLDALDELMRALKKEGDSIGAKVTVIASGVPAGLGEPVFDRLDADIAHALMSINAVKGVEIGEGFKVVALRGSQNRDEITAQGFQSNHAGGILGGISSGQHIVAHMALKPTSSITVPGRTINRMGEEVEMITKGRHDPCVGIRAVPIAEAMLAIVLMDHLLRHRAQNADVKTEIPRW.

Residues Arg48 and Arg54 each coordinate NADP(+). FMN contacts are provided by residues 125–127 (RSS), 238–239 (NA), Gly278, 293–297 (KPTSS), and Arg319.

It belongs to the chorismate synthase family. As to quaternary structure, homotetramer. Requires FMNH2 as cofactor.

It catalyses the reaction 5-O-(1-carboxyvinyl)-3-phosphoshikimate = chorismate + phosphate. Its pathway is metabolic intermediate biosynthesis; chorismate biosynthesis; chorismate from D-erythrose 4-phosphate and phosphoenolpyruvate: step 7/7. Catalyzes the anti-1,4-elimination of the C-3 phosphate and the C-6 proR hydrogen from 5-enolpyruvylshikimate-3-phosphate (EPSP) to yield chorismate, which is the branch point compound that serves as the starting substrate for the three terminal pathways of aromatic amino acid biosynthesis. This reaction introduces a second double bond into the aromatic ring system. The polypeptide is Chorismate synthase (Salmonella arizonae (strain ATCC BAA-731 / CDC346-86 / RSK2980)).